Reading from the N-terminus, the 273-residue chain is Manganese catalase (273 aa).

Glu35 provides a ligand contact to Mn(2+). Residues Asp57 and Asp61 each coordinate Ca(2+). Positions 66, 69, 149, and 182 each coordinate Mn(2+). Ca(2+)-binding residues include Asn220, Ser222, and Gly224. A disordered region spans residues 254-273 (EKPELKPAPPCVHNTLPGRE).

It belongs to the manganese catalase family. Homohexamer. Requires Ca(2+) as cofactor. The cofactor is Mn(2+).

It carries out the reaction 2 H2O2 = O2 + 2 H2O. With respect to regulation, inhibited in the presence of EDTA. Resistant to inhibition by sodium azide. Functionally, catalyzes the decomposition of hydrogen peroxide into water and oxygen. No significant activity could be detected with any of the other tested substrates, including glutathione, pyrogallol, NADH, NADPH and o-dianisidine. In Bacillus subtilis, this protein is Manganese catalase.